Consider the following 146-residue polypeptide: Angiogenin (146 aa).

The first 24 residues, 1 to 24 (MVMGLHLLLLVFILGLGLTPPTLA), serve as a signal peptide directing secretion. The residue at position 25 (Gln25) is a Pyrrolidone carboxylic acid. The active-site Proton acceptor is the His37. 3 disulfide bridges follow: Cys50/Cys105, Cys63/Cys116, and Cys81/Cys131. The short motif at 55–59 (RLRNM) is the Nucleolar localization signal element. Cys105 is a tRNA binding site. His138 functions as the Proton donor in the catalytic mechanism.

The protein belongs to the pancreatic ribonuclease family. Homodimer. Interacts with RNH1; inhibiting ANG ribonuclease activity. Interacts with PCNA.

It localises to the secreted. It is found in the nucleus. The protein resides in the nucleolus. The protein localises to the cytoplasm. Its subcellular location is the stress granule. Its activity is regulated as follows. Has weak tRNA ribonuclease activity by itself due to partial autoinhibition by its C-terminus, which folds into a short alpha-helix that partially occludes the substrate-binding site. In absence of stress, the ribonuclease activity is inhibited by RNH1 in the cytoplasm. In response to stress, dissociates from RNH1 in the cytoplasm and associates with cytoplasmic ribosomes with vacant A-sites: ribosomes directly activate the tRNA ribonuclease activity of ANG by refolding the C-terminal alpha-helix. In response to stress, the angiogenic activity of ANG is inhibited by RNH1 in the nucleus. Its function is as follows. Secreted ribonuclease that can either promote or restrict cell proliferation of target cells, depending on the context. Endocytosed in target cells via its receptor PLXNB2 and translocates to the cytoplasm or nucleus. Under stress conditions, localizes to the cytoplasm and promotes the assembly of stress granules (SGs): specifically cleaves a subset of tRNAs within anticodon loops to produce tRNA-derived stress-induced fragments (tiRNAs), resulting in translation repression and inhibition of cell proliferation. tiRNas also prevent formation of apoptosome, thereby promoting cell survival. Preferentially cleaves RNAs between a pyrimidine and an adenosine residue, suggesting that it cleaves the anticodon loop of tRNA(Ala) (32-UUAGCAU-38) after positions 33 and 36. Cleaves a subset of tRNAs, including tRNA(Ala), tRNA(Glu), tRNA(Gly), tRNA(Lys), tRNA(Val), tRNA(His), tRNA(Asp) and tRNA(Sec). Under growth conditions and in differentiated cells, translocates to the nucleus and stimulates ribosomal RNA (rRNA) transcription, including that containing the initiation site sequences of 45S rRNA, thereby promoting cell growth and proliferation. Angiogenin induces vascularization of normal and malignant tissues via its ability to promote rRNA transcription. Involved in hematopoietic stem and progenitor cell (HSPC) growth and survival by promoting rRNA transcription in growth conditions and inhibiting translation in response to stress, respectively. Mediates the crosstalk between myeloid and intestinal epithelial cells to protect the intestinal epithelial barrier integrity: secreted by myeloid cells and promotes intestinal epithelial cells proliferation and survival. Also mediates osteoclast-endothelial cell crosstalk in growing bone: produced by osteoclasts and protects the neighboring vascular cells against senescence by promoting rRNA transcription. The chain is Angiogenin (ANG) from Aotus trivirgatus (Three-striped night monkey).